The sequence spans 230 residues: Cytidylate kinase (230 aa).

12 to 20 is an ATP binding site; sequence GPSGAGKGT.

Belongs to the cytidylate kinase family. Type 1 subfamily.

It localises to the cytoplasm. The enzyme catalyses CMP + ATP = CDP + ADP. It catalyses the reaction dCMP + ATP = dCDP + ADP. This chain is Cytidylate kinase, found in Yersinia pseudotuberculosis serotype O:1b (strain IP 31758).